A 283-amino-acid chain; its full sequence is Pantothenate synthetase (283 aa).

Position 26 to 33 (26 to 33 (MGNLHAGH)) interacts with ATP. Catalysis depends on His-33, which acts as the Proton donor. Gln-57 lines the (R)-pantoate pocket. Beta-alanine is bound at residue Gln-57. Position 144–147 (144–147 (GRKD)) interacts with ATP. Residue Gln-150 participates in (R)-pantoate binding. ATP contacts are provided by residues Leu-173 and 181–184 (MSSR).

Belongs to the pantothenate synthetase family. In terms of assembly, homodimer.

The protein resides in the cytoplasm. It carries out the reaction (R)-pantoate + beta-alanine + ATP = (R)-pantothenate + AMP + diphosphate + H(+). Its pathway is cofactor biosynthesis; (R)-pantothenate biosynthesis; (R)-pantothenate from (R)-pantoate and beta-alanine: step 1/1. Its function is as follows. Catalyzes the condensation of pantoate with beta-alanine in an ATP-dependent reaction via a pantoyl-adenylate intermediate. This chain is Pantothenate synthetase, found in Thiobacillus denitrificans (strain ATCC 25259 / T1).